The following is a 207-amino-acid chain: Imidazole glycerol phosphate synthase subunit HisH (207 aa).

One can recognise a Glutamine amidotransferase type-1 domain in the interval 1-207 (MIAIVDYNMG…ENFTKYRNLK (207 aa)). The active-site Nucleophile is Cys-79. Residues His-185 and Glu-187 contribute to the active site.

As to quaternary structure, heterodimer of HisH and HisF.

It localises to the cytoplasm. It catalyses the reaction 5-[(5-phospho-1-deoxy-D-ribulos-1-ylimino)methylamino]-1-(5-phospho-beta-D-ribosyl)imidazole-4-carboxamide + L-glutamine = D-erythro-1-(imidazol-4-yl)glycerol 3-phosphate + 5-amino-1-(5-phospho-beta-D-ribosyl)imidazole-4-carboxamide + L-glutamate + H(+). The catalysed reaction is L-glutamine + H2O = L-glutamate + NH4(+). Its pathway is amino-acid biosynthesis; L-histidine biosynthesis; L-histidine from 5-phospho-alpha-D-ribose 1-diphosphate: step 5/9. Its function is as follows. IGPS catalyzes the conversion of PRFAR and glutamine to IGP, AICAR and glutamate. The HisH subunit catalyzes the hydrolysis of glutamine to glutamate and ammonia as part of the synthesis of IGP and AICAR. The resulting ammonia molecule is channeled to the active site of HisF. In Sulfurimonas denitrificans (strain ATCC 33889 / DSM 1251) (Thiomicrospira denitrificans (strain ATCC 33889 / DSM 1251)), this protein is Imidazole glycerol phosphate synthase subunit HisH.